The following is a 156-amino-acid chain: Small ribosomal subunit protein uS7 (156 aa).

Belongs to the universal ribosomal protein uS7 family. Part of the 30S ribosomal subunit. Contacts proteins S9 and S11.

One of the primary rRNA binding proteins, it binds directly to 16S rRNA where it nucleates assembly of the head domain of the 30S subunit. Is located at the subunit interface close to the decoding center, probably blocks exit of the E-site tRNA. In Prochlorococcus marinus (strain MIT 9211), this protein is Small ribosomal subunit protein uS7.